The primary structure comprises 88 residues: Small ribosomal subunit protein uS15 (88 aa).

It belongs to the universal ribosomal protein uS15 family. Part of the 30S ribosomal subunit. Forms a bridge to the 50S subunit in the 70S ribosome, contacting the 23S rRNA.

Its function is as follows. One of the primary rRNA binding proteins, it binds directly to 16S rRNA where it helps nucleate assembly of the platform of the 30S subunit by binding and bridging several RNA helices of the 16S rRNA. Functionally, forms an intersubunit bridge (bridge B4) with the 23S rRNA of the 50S subunit in the ribosome. The sequence is that of Small ribosomal subunit protein uS15 from Caldicellulosiruptor saccharolyticus (strain ATCC 43494 / DSM 8903 / Tp8T 6331).